Reading from the N-terminus, the 35-residue chain is Purotoxin-1 (35 aa).

Intrachain disulfides connect C3/C16, C10/C21, C15/C32, and C23/C30.

Belongs to the neurotoxin 33 family. In terms of tissue distribution, expressed by the venom gland.

The protein localises to the secreted. Its function is as follows. Inhibits P2RX3 receptors. Has an analgesic effect in rat. Enhances the high-affinity desensitization of P2RX3 purinoceptors. At 50 nM, decreases the IC(50) for ambient ATP from 46.5 nM to 12.7 nM in mouse P2RX3. This chain is Purotoxin-1, found in Alopecosa marikovskyi (Wolf spider).